Here is a 282-residue protein sequence, read N- to C-terminus: Elongation factor Ts (282 aa).

The involved in Mg(2+) ion dislocation from EF-Tu stretch occupies residues 79 to 82; the sequence is TDFV.

It belongs to the EF-Ts family.

The protein resides in the cytoplasm. Its function is as follows. Associates with the EF-Tu.GDP complex and induces the exchange of GDP to GTP. It remains bound to the aminoacyl-tRNA.EF-Tu.GTP complex up to the GTP hydrolysis stage on the ribosome. This Shewanella piezotolerans (strain WP3 / JCM 13877) protein is Elongation factor Ts.